A 20-amino-acid polypeptide reads, in one-letter code: Tetracycline resistance leader peptide (20 aa).

The disordered stretch occupies residues 1–20 (MKCNKMNRVQLKEGSVSMTL).

In Bacillus subtilis (strain 168), this protein is Tetracycline resistance leader peptide (tetL).